A 408-amino-acid chain; its full sequence is GTPase Obg (408 aa).

The region spanning 1–159 (MKFVDEVSIR…RDLKMEMKVL (159 aa)) is the Obg domain. A disordered region spans residues 127-148 (NTRFKSSTNRAPRQTTPGKPGE). Residues 129–143 (RFKSSTNRAPRQTTP) are compositionally biased toward polar residues. Residues 160–333 (ADVGLLGLPN…LSHDLMRYLE (174 aa)) form the OBG-type G domain. GTP contacts are provided by residues 166-173 (GLPNAGKS), 191-195 (FTTLV), 213-216 (DIPG), 283-286 (NKAD), and 314-316 (SAI). 2 residues coordinate Mg(2+): Ser-173 and Thr-193. The segment covering 385-401 (GDDDGWDDDFEDDEDGP) has biased composition (acidic residues). A disordered region spans residues 385-408 (GDDDGWDDDFEDDEDGPEIIYVRD).

Belongs to the TRAFAC class OBG-HflX-like GTPase superfamily. OBG GTPase family. As to quaternary structure, monomer. The cofactor is Mg(2+).

The protein resides in the cytoplasm. In terms of biological role, an essential GTPase which binds GTP, GDP and possibly (p)ppGpp with moderate affinity, with high nucleotide exchange rates and a fairly low GTP hydrolysis rate. Plays a role in control of the cell cycle, stress response, ribosome biogenesis and in those bacteria that undergo differentiation, in morphogenesis control. In Pseudomonas putida (strain ATCC 700007 / DSM 6899 / JCM 31910 / BCRC 17059 / LMG 24140 / F1), this protein is GTPase Obg.